Consider the following 336-residue polypeptide: Ribosomal RNA large subunit methyltransferase F (336 aa).

This sequence belongs to the methyltransferase superfamily. METTL16/RlmF family.

It is found in the cytoplasm. The enzyme catalyses adenosine(1618) in 23S rRNA + S-adenosyl-L-methionine = N(6)-methyladenosine(1618) in 23S rRNA + S-adenosyl-L-homocysteine + H(+). In terms of biological role, specifically methylates the adenine in position 1618 of 23S rRNA. This is Ribosomal RNA large subunit methyltransferase F from Yersinia pestis (strain Pestoides F).